A 307-amino-acid chain; its full sequence is MLQQRTIKTLTRAVGVGLHSGQRVELTLRPAQPDTGIVFRRVDLPEPVDIPITATAVVDTRMASTIGAGGAKVHTVEHLMSACAGLGLDNLYIDITAEEVPILDGSSASFVFLLQSAGVELQNAPKRFIRVKRPVEVREGTGQQLKWARLEPYHGFKLRFDIDFAHPAVDSTGQSAEFDLGEGNYARDIARARTFGFTKDVEMLRSSGLALGGGLDNAIVMDDYKVLNADSLRYDAEFARHKILDAMGDLYLVGKPLLAAYSAFRSGHAMNNLLLRELLAHEDAWEIVTFENERQAPAGFTQPVRAW.

3 residues coordinate Zn(2+): H78, H241, and D245. The Proton donor role is filled by H268.

The protein belongs to the LpxC family. It depends on Zn(2+) as a cofactor.

The catalysed reaction is a UDP-3-O-[(3R)-3-hydroxyacyl]-N-acetyl-alpha-D-glucosamine + H2O = a UDP-3-O-[(3R)-3-hydroxyacyl]-alpha-D-glucosamine + acetate. The protein operates within glycolipid biosynthesis; lipid IV(A) biosynthesis; lipid IV(A) from (3R)-3-hydroxytetradecanoyl-[acyl-carrier-protein] and UDP-N-acetyl-alpha-D-glucosamine: step 2/6. In terms of biological role, catalyzes the hydrolysis of UDP-3-O-myristoyl-N-acetylglucosamine to form UDP-3-O-myristoylglucosamine and acetate, the committed step in lipid A biosynthesis. This Acidovorax sp. (strain JS42) protein is UDP-3-O-acyl-N-acetylglucosamine deacetylase.